Here is a 356-residue protein sequence, read N- to C-terminus: UDP-N-acetylglucosamine--N-acetylmuramyl-(pentapeptide) pyrophosphoryl-undecaprenol N-acetylglucosamine transferase (356 aa).

UDP-N-acetyl-alpha-D-glucosamine contacts are provided by Arg-166, Ser-196, and Gln-290.

Belongs to the glycosyltransferase 28 family. MurG subfamily.

The protein localises to the cell membrane. The enzyme catalyses Mur2Ac(oyl-L-Ala-gamma-D-Glu-L-Lys-D-Ala-D-Ala)-di-trans,octa-cis-undecaprenyl diphosphate + UDP-N-acetyl-alpha-D-glucosamine = beta-D-GlcNAc-(1-&gt;4)-Mur2Ac(oyl-L-Ala-gamma-D-Glu-L-Lys-D-Ala-D-Ala)-di-trans,octa-cis-undecaprenyl diphosphate + UDP + H(+). It functions in the pathway cell wall biogenesis; peptidoglycan biosynthesis. In terms of biological role, cell wall formation. Catalyzes the transfer of a GlcNAc subunit on undecaprenyl-pyrophosphoryl-MurNAc-pentapeptide (lipid intermediate I) to form undecaprenyl-pyrophosphoryl-MurNAc-(pentapeptide)GlcNAc (lipid intermediate II). The sequence is that of UDP-N-acetylglucosamine--N-acetylmuramyl-(pentapeptide) pyrophosphoryl-undecaprenol N-acetylglucosamine transferase from Staphylococcus aureus (strain bovine RF122 / ET3-1).